We begin with the raw amino-acid sequence, 153 residues long: Antibacterial peptide PMAP-23 (153 aa).

The signal sequence occupies residues 1–29 (METQRASLCLGRWSLWLLLLGLVVPSASA). Glutamine 30 carries the post-translational modification Pyrrolidone carboxylic acid. Residues 30-130 (QALSYREAVL…DITCNQLQSV (101 aa)) constitute a propeptide that is removed on maturation. Positions 61-80 (DQPPKADEDPGTPKPVSFTV) are disordered. Disulfide bonds link cysteine 85/cysteine 96 and cysteine 107/cysteine 124.

The protein belongs to the cathelicidin family.

The protein localises to the secreted. Exerts antimicrobial activity against both Gram-positive and negative bacteria at concentrations of 2-16 micro molar. Its activity appears to be mediated by its ability to damage bacterial membranes. This Sus scrofa (Pig) protein is Antibacterial peptide PMAP-23 (PMAP23).